The primary structure comprises 132 residues: Fatty acid-binding protein, intestinal (132 aa).

The residue at position 2 (A2) is an N-acetylalanine. Hexadecanoate is bound by residues W83 and R107. The tetradecanoate site is built by W83 and R107.

It belongs to the calycin superfamily. Fatty-acid binding protein (FABP) family.

It localises to the cytoplasm. Functionally, FABPs are thought to play a role in the intracellular transport of long-chain fatty acids and their acyl-CoA esters. FABP2 is probably involved in triglyceride-rich lipoprotein synthesis. Binds saturated long-chain fatty acids with a high affinity, but binds with a lower affinity to unsaturated long-chain fatty acids. FABP2 may also help maintain energy homeostasis by functioning as a lipid sensor. The sequence is that of Fatty acid-binding protein, intestinal (FABP2) from Sus scrofa (Pig).